The primary structure comprises 342 residues: MSETTLILAIESSCDETSVSIIENGKNILSNIVLSQIESHKRFGGVVPEVASRHHVEGITTTIDEALNSANTTMNDIDAVAVTQGPGLIGALLVGINAAKALAFAYDKPLIPVHHIAGHVYANHLEKPLQFPLIALIVSGGHTELVYMKNHLSFEVIGETRDDAVGEAYDKVARTIGLSYPGGPQVDNLAAHGEDSYDFPRVWLDKNSYDFSFSGLKSAVINKLHNLRQKGEAINEANVATSFQNSVVEVLVGKTIAACKNYNVNQLIVAGGVASNKGLRAHLSSACESNDINLSIPSPKLCTDNAAMIGAAGYYLFKAGVTADMALNGYNHMDIEQCSIES.

Fe cation contacts are provided by H115 and H119. Substrate-binding positions include 137–141 (IVSGG), D170, G183, D187, and N276. Position 304 (D304) interacts with Fe cation.

The protein belongs to the KAE1 / TsaD family. Fe(2+) serves as cofactor.

Its subcellular location is the cytoplasm. It carries out the reaction L-threonylcarbamoyladenylate + adenosine(37) in tRNA = N(6)-L-threonylcarbamoyladenosine(37) in tRNA + AMP + H(+). Required for the formation of a threonylcarbamoyl group on adenosine at position 37 (t(6)A37) in tRNAs that read codons beginning with adenine. Is involved in the transfer of the threonylcarbamoyl moiety of threonylcarbamoyl-AMP (TC-AMP) to the N6 group of A37, together with TsaE and TsaB. TsaD likely plays a direct catalytic role in this reaction. The chain is tRNA N6-adenosine threonylcarbamoyltransferase from Staphylococcus saprophyticus subsp. saprophyticus (strain ATCC 15305 / DSM 20229 / NCIMB 8711 / NCTC 7292 / S-41).